We begin with the raw amino-acid sequence, 646 residues long: P-selectin (646 aa).

The first 41 residues, 1 to 41 (MASCPKAIWNWRFQRAVFRTVQLLCFSVLIFEVINQKEVSA), serve as a signal peptide directing secretion. The Extracellular segment spans residues 42–587 (WTYHYSNKTY…QAGPLTIQET (546 aa)). N-linked (GlcNAc...) asparagine glycosylation is found at N48, N54, and N80. A C-type lectin domain is found at 58-158 (AFCQKYYTDL…PCWKRKRALC (101 aa)). 17 disulfide bridges follow: C60/C158, C131/C150, C163/C174, C168/C183, C185/C194, C200/C244, C230/C257, C262/C306, C292/C319, C324/C368, C354/C381, C386/C430, C416/C443, C458/C502, C488/C515, C520/C564, and C550/C577. Ca(2+) contacts are provided by E121, N123, and N124. Residue N123 coordinates a carbohydrate. A carbohydrate contacts are provided by E133 and N146. Ca(2+) is bound by residues N146 and D147. In terms of domain architecture, EGF-like spans 159-195 (YRASCQDMSCSKQGECIETIGNYTCSCYPGFYGPECE). N180 is a glycosylation site (N-linked (GlcNAc...) asparagine). 6 consecutive Sushi domains span residues 198-259 (RECG…QCVA), 260-321 (VQCP…VCKA), 322-383 (LQCQ…ECQA), 384-445 (VTCA…TCEE), 456-517 (VQCP…TCRA), and 518-579 (VKCA…TCQA). N-linked (GlcNAc...) asparagine glycosylation is found at N212 and N219. N-linked (GlcNAc...) asparagine glycosylation is present at N336. N481 carries an N-linked (GlcNAc...) asparagine glycan. N-linked (GlcNAc...) asparagine glycosylation is found at N532, N539, and N557. Residues 588-611 (LTYVGGAAAGTTGLVTGSILLALL) form a helical membrane-spanning segment. Residues 612 to 646 (RRRCRQKDDGKSPLNPQSHLGTYGVFTNAAFDPSP) lie on the Cytoplasmic side of the membrane. The Endocytosis signal motif lies at 634–637 (YGVF). Positions 637–646 (FTNAAFDPSP) are interaction with SNX17.

It belongs to the selectin/LECAM family. In terms of assembly, interacts with SNX17. Interacts with SELPLG/PSGL1 and PODXL2 and mediates neutrophil adhesion and leukocyte rolling. This interaction requires the sialyl-Lewis X epitope of SELPLG and PODXL2, and specific tyrosine sulfation on SELPLG. Interacts (via C-type lectin domain) with alpha-IIb/beta3 integrin ITGA2B:ITGB3 and alpha-V/beta-3 integrin ITGAV:ITGB3. Interacts with alpha5/beta1 integrin ITGA5:ITGB1 and alpha4/beta1 integrin ITGA4:ITGB. In terms of tissue distribution, stored in the alpha-granules of platelets and Weibel-Palade bodies of endothelial cells. Upon cell activation by agonists, P-selectin is transported rapidly to the cell surface.

The protein resides in the cell membrane. Functionally, ca(2+)-dependent receptor for myeloid cells that binds to carbohydrates on neutrophils and monocytes. Mediates the interaction of activated endothelial cells or platelets with leukocytes. The ligand recognized is sialyl-Lewis X. Mediates rapid rolling of leukocyte rolling over vascular surfaces during the initial steps in inflammation through interaction with SELPLG. Mediates cell-cell interactions and cell adhesion via the interaction with integrin alpha-IIb/beta3 (ITGA2B:ITGB3) and integrin alpha-V/beta-3 (ITGAV:ITGB3). This Bos taurus (Bovine) protein is P-selectin (SELP).